Consider the following 138-residue polypeptide: Small ribosomal subunit protein uS11 (138 aa).

This sequence belongs to the universal ribosomal protein uS11 family. Part of the 30S ribosomal subunit.

In terms of biological role, located on the platform of the 30S subunit. The sequence is that of Small ribosomal subunit protein uS11 from Pyrobaculum arsenaticum (strain DSM 13514 / JCM 11321 / PZ6).